Consider the following 164-residue polypeptide: ATP synthase subunit b (164 aa).

The helical transmembrane segment at 4-24 threads the bilayer; it reads LGINPTLFIAQLINFLLLIFI.

The protein belongs to the ATPase B chain family. As to quaternary structure, F-type ATPases have 2 components, F(1) - the catalytic core - and F(0) - the membrane proton channel. F(1) has five subunits: alpha(3), beta(3), gamma(1), delta(1), epsilon(1). F(0) has four main subunits: a(1), b(2) and c(10-14). The alpha and beta chains form an alternating ring which encloses part of the gamma chain. F(1) is attached to F(0) by a central stalk formed by the gamma and epsilon chains, while a peripheral stalk is formed by the delta and b chains.

The protein localises to the cell membrane. F(1)F(0) ATP synthase produces ATP from ADP in the presence of a proton or sodium gradient. F-type ATPases consist of two structural domains, F(1) containing the extramembraneous catalytic core and F(0) containing the membrane proton channel, linked together by a central stalk and a peripheral stalk. During catalysis, ATP synthesis in the catalytic domain of F(1) is coupled via a rotary mechanism of the central stalk subunits to proton translocation. In terms of biological role, component of the F(0) channel, it forms part of the peripheral stalk, linking F(1) to F(0). This Chloroflexus aurantiacus (strain ATCC 29366 / DSM 635 / J-10-fl) protein is ATP synthase subunit b.